A 736-amino-acid chain; its full sequence is MTDTLFDRADIDALLAGRHPDPFACLGPHRHDDQIVVRALLPGAERVRALSPDGAELGTLACVDRAGCFAGTIAHDGGAPHYLLSIDWPDAHQVTDDAYAFGTLLDEAALARFSAGDPEAVLDCLGATPVRIDDTDGVRFAVWAPSAQRVSVVGDFNAWDGRRHPMRLRRPSGVWELFVPGIGAGERYKYELCAADGRVLPHKADPCARATEAPPRTASVVADVAALHAFAWHDDGWMHARPRHDDRYRVPWSIYEVHPESWQRIPEQMDRSATWDELAERLIPYVKGMGFTHVEFMPIAEYPFGGSWGYQPLAQFAPSARFGPVEGFARFVDRAHAAGIGVLVDWVPAHFPNDAHGLAQFDGSALYEHADPREGMHPDWNTCVFNVGRTEVSAFLVASALAWARRYHVDGIRVDAVASMLYRDYSRKEGEWVPNVYGGRENLESVAFLRRLNDTLHGDAAPAGVVTVAEESTAWPGVTAPTADGGLGFDFKWNMGWMHDTLAYLHEDPIHRRYHHDRMTFGLVYAFSERFVLPLSHDEVVHGKGSLVAKMPGDAWQRLATLRAYFGFMWAHPGKKLLFMGSEFAQWSEFAHDATPHWDLLDAPAHRGVQRLVRDLNRAYAAEPALHALDCHAAGFAWLIGDDRDNSVFAFARRDDTGRLVVAVCNFTPVPRAGYRLGLPAPGHWRELMNTDAASYGGANAGNDGAVWAEAVPAHGEAWSASLRLPPLATLWLTPA.

Aspartate 415 acts as the Nucleophile in catalysis. The active-site Proton donor is the glutamate 470.

It belongs to the glycosyl hydrolase 13 family. GlgB subfamily. As to quaternary structure, monomer.

The enzyme catalyses Transfers a segment of a (1-&gt;4)-alpha-D-glucan chain to a primary hydroxy group in a similar glucan chain.. It functions in the pathway glycan biosynthesis; glycogen biosynthesis. Functionally, catalyzes the formation of the alpha-1,6-glucosidic linkages in glycogen by scission of a 1,4-alpha-linked oligosaccharide from growing alpha-1,4-glucan chains and the subsequent attachment of the oligosaccharide to the alpha-1,6 position. The chain is 1,4-alpha-glucan branching enzyme GlgB from Burkholderia orbicola (strain AU 1054).